A 208-amino-acid chain; its full sequence is Thymidylate kinase (208 aa).

ATP is bound at residue 13–20 (GLEGAGKS).

Belongs to the thymidylate kinase family.

It carries out the reaction dTMP + ATP = dTDP + ADP. Phosphorylation of dTMP to form dTDP in both de novo and salvage pathways of dTTP synthesis. The chain is Thymidylate kinase from Shewanella amazonensis (strain ATCC BAA-1098 / SB2B).